The following is a 165-amino-acid chain: UPF0254 protein MmarC7_0182 (165 aa).

Belongs to the UPF0254 family.

In Methanococcus maripaludis (strain C7 / ATCC BAA-1331), this protein is UPF0254 protein MmarC7_0182.